Here is a 57-residue protein sequence, read N- to C-terminus: MSEFDAQRVAERIDIVLDILVADDYHSAIHNLEILKAELLRQVAESTPDIPKAPWEI.

It belongs to the UPF0509 family.

This Escherichia coli O157:H7 protein is UPF0509 protein YciZ (yciZ).